The following is a 375-amino-acid chain: Succinyl-diaminopimelate desuccinylase (375 aa).

His-66 provides a ligand contact to Zn(2+). Asp-68 is an active-site residue. Asp-99 lines the Zn(2+) pocket. The active-site Proton acceptor is the Glu-133. Zn(2+)-binding residues include Glu-134, Glu-162, and His-348.

This sequence belongs to the peptidase M20A family. DapE subfamily. In terms of assembly, homodimer. Zn(2+) serves as cofactor. Co(2+) is required as a cofactor.

The catalysed reaction is N-succinyl-(2S,6S)-2,6-diaminopimelate + H2O = (2S,6S)-2,6-diaminopimelate + succinate. It functions in the pathway amino-acid biosynthesis; L-lysine biosynthesis via DAP pathway; LL-2,6-diaminopimelate from (S)-tetrahydrodipicolinate (succinylase route): step 3/3. Its function is as follows. Catalyzes the hydrolysis of N-succinyl-L,L-diaminopimelic acid (SDAP), forming succinate and LL-2,6-diaminopimelate (DAP), an intermediate involved in the bacterial biosynthesis of lysine and meso-diaminopimelic acid, an essential component of bacterial cell walls. In Salmonella agona (strain SL483), this protein is Succinyl-diaminopimelate desuccinylase.